The chain runs to 218 residues: Small ribosomal subunit protein mS34 (218 aa).

The tract at residues 180-218 (KNGDTSTEEPMLNVQRIRMEPWDYPAKQEDKGRAKGTPV) is disordered. The span at 196 to 212 (IRMEPWDYPAKQEDKGR) shows a compositional bias: basic and acidic residues.

Belongs to the mitochondrion-specific ribosomal protein mS34 family. In terms of assembly, component of the mitochondrial small ribosomal subunit (mt-SSU). Mature mammalian 55S mitochondrial ribosomes consist of a small (28S) and a large (39S) subunit. The 28S small subunit contains a 12S ribosomal RNA (12S mt-rRNA) and 30 different proteins. The 39S large subunit contains a 16S rRNA (16S mt-rRNA), a copy of mitochondrial valine transfer RNA (mt-tRNA(Val)), which plays an integral structural role, and 52 different proteins.

Its subcellular location is the mitochondrion. Its function is as follows. Required for mitochondrial translation, plays a role in maintaining the stability of the small ribosomal subunit and the 12S rRNA that are required for mitoribosome formation. This Homo sapiens (Human) protein is Small ribosomal subunit protein mS34 (MRPS34).